Reading from the N-terminus, the 554-residue chain is Hydroxylamine reductase (554 aa).

Residues C3, C6, C18, and C25 each coordinate [2Fe-2S] cluster. Hybrid [4Fe-2O-2S] cluster is bound by residues H252, E276, C320, C408, C436, C461, E495, and K497. C408 is subject to Cysteine persulfide.

This sequence belongs to the HCP family. [2Fe-2S] cluster serves as cofactor. Hybrid [4Fe-2O-2S] cluster is required as a cofactor.

It localises to the cytoplasm. The enzyme catalyses A + NH4(+) + H2O = hydroxylamine + AH2 + H(+). Catalyzes the reduction of hydroxylamine to form NH(3) and H(2)O. This is Hydroxylamine reductase from Shewanella amazonensis (strain ATCC BAA-1098 / SB2B).